Consider the following 583-residue polypeptide: Asparagine synthetase, root [glutamine-hydrolyzing] (583 aa).

C2 functions as the For GATase activity in the catalytic mechanism. The 184-residue stretch at 2 to 185 folds into the Glutamine amidotransferase type-2 domain; the sequence is CGILAVLGCS…PGHLYSSKDS (184 aa). Residues 50-54, 75-77, and D98 contribute to the L-glutamine site; these read RLAIV and NGE. ATP contacts are provided by residues L231, V267, and 341–342; that span reads SG. An Asparagine synthetase domain is found at 237–516; it reads DSSLVASITS…PQNSARLTVP (280 aa).

Roots.

The enzyme catalyses L-aspartate + L-glutamine + ATP + H2O = L-asparagine + L-glutamate + AMP + diphosphate + H(+). It participates in amino-acid biosynthesis; L-asparagine biosynthesis; L-asparagine from L-aspartate (L-Gln route): step 1/1. This is Asparagine synthetase, root [glutamine-hydrolyzing] (AS2) from Pisum sativum (Garden pea).